The sequence spans 144 residues: Ribonuclease VapC45 (144 aa).

Mg(2+)-binding residues include aspartate 7 and aspartate 102.

This sequence belongs to the PINc/VapC protein family. The cofactor is Mg(2+).

Toxic component of a type II toxin-antitoxin (TA) system. An RNase. Its cognate antitoxin is VapB45. The polypeptide is Ribonuclease VapC45 (Mycobacterium tuberculosis (strain CDC 1551 / Oshkosh)).